A 73-amino-acid polypeptide reads, in one-letter code: Putative membrane protein insertion efficiency factor (73 aa).

This sequence belongs to the UPF0161 family.

Its subcellular location is the cell inner membrane. Could be involved in insertion of integral membrane proteins into the membrane. In Neisseria meningitidis serogroup C (strain 053442), this protein is Putative membrane protein insertion efficiency factor.